Here is a 258-residue protein sequence, read N- to C-terminus: Very-long-chain aldehyde decarbonylase GL1-9 (258 aa).

Helical transmembrane passes span 13-33, 63-83, 88-108, 149-169, and 175-195; these read MGTF…QLVL, GVLL…MVTS, VVVQ…MLVM, PLEG…VSGM, and VFFF…LWLP. A Fatty acid hydroxylase domain is found at 101 to 237; the sequence is FLVAMLVMDS…FSIWDRILGT (137 aa).

The protein belongs to the sterol desaturase family. In terms of assembly, homodimer.

Its subcellular location is the endoplasmic reticulum membrane. It carries out the reaction a long-chain fatty aldehyde + 2 NADPH + O2 + H(+) = a long-chain alkane + formate + 2 NADP(+) + H2O. Aldehyde decarbonylase involved in the conversion of aldehydes to alkanes. Core component of a very-long-chain alkane synthesis complex. This Oryza sativa subsp. indica (Rice) protein is Very-long-chain aldehyde decarbonylase GL1-9.